Reading from the N-terminus, the 244-residue chain is Carboxy-S-adenosyl-L-methionine synthase (244 aa).

Residues tyrosine 38, 63–65 (GCS), 88–89 (DN), 116–117 (DI), asparagine 131, and arginine 198 contribute to the S-adenosyl-L-methionine site.

This sequence belongs to the class I-like SAM-binding methyltransferase superfamily. Cx-SAM synthase family. As to quaternary structure, homodimer.

The catalysed reaction is prephenate + S-adenosyl-L-methionine = carboxy-S-adenosyl-L-methionine + 3-phenylpyruvate + H2O. Catalyzes the conversion of S-adenosyl-L-methionine (SAM) to carboxy-S-adenosyl-L-methionine (Cx-SAM). The polypeptide is Carboxy-S-adenosyl-L-methionine synthase (Haemophilus ducreyi (strain 35000HP / ATCC 700724)).